The following is a 126-amino-acid chain: MYYLKPIGVVEQNENYTVLNIFDEFVEGLDGLKEGDYIIVLVWFHKNDSEEKRKILKVHPRGDINNPLKGVFATRSPYRPNPIGKYTVKIHKIYRNKIFIDKIDAYNETPIIDIKIFSEKLDCPKI.

In terms of domain architecture, TsaA-like spans 4-126 (LKPIGVVEQN…FSEKLDCPKI (123 aa)). S-adenosyl-L-methionine contacts are provided by residues 45 to 46 (HK), R75, and 106 to 109 (YNET).

This sequence belongs to the tRNA methyltransferase O family.

This is Probable S-adenosyl-L-methionine-binding protein MJ1583 from Methanocaldococcus jannaschii (strain ATCC 43067 / DSM 2661 / JAL-1 / JCM 10045 / NBRC 100440) (Methanococcus jannaschii).